We begin with the raw amino-acid sequence, 484 residues long: EF-hand calcium-binding domain-containing protein 14 (484 aa).

Disordered stretches follow at residues 1-48, 227-255, and 313-395; these read MKKR…TDEE, GSME…HSES, and EQRT…FTSD. Over residues 37–48 the composition is skewed to acidic residues; sequence PDSDSESSTDEE. Composition is skewed to polar residues over residues 228–239, 315–324, and 335–347; these read SMENNGSNQILP, RTNVSSSTME, and LVTN…QAQS. EF-hand domains follow at residues 423 to 452 and 453 to 484; these read SSIK…WNSL and GSAM…ALGI. Ca(2+) contacts are provided by aspartate 466, asparagine 468, aspartate 470, arginine 472, and glutamate 477.

The protein is EF-hand calcium-binding domain-containing protein 14 (Efcab14) of Mus musculus (Mouse).